Here is a 214-residue protein sequence, read N- to C-terminus: Pyridoxine/pyridoxamine 5'-phosphate oxidase (214 aa).

Residues 8-11 and K67 contribute to the substrate site; that span reads RKSY. FMN contacts are provided by residues 62–67, 77–78, K84, and Q106; these read RVVLLK and YT. Y124, R128, and S132 together coordinate substrate. FMN is bound by residues 141-142 and W186; that span reads QS. 192–194 provides a ligand contact to substrate; it reads RLH. Residue R196 participates in FMN binding.

It belongs to the pyridoxamine 5'-phosphate oxidase family. Homodimer. Requires FMN as cofactor.

The enzyme catalyses pyridoxamine 5'-phosphate + O2 + H2O = pyridoxal 5'-phosphate + H2O2 + NH4(+). It catalyses the reaction pyridoxine 5'-phosphate + O2 = pyridoxal 5'-phosphate + H2O2. It functions in the pathway cofactor metabolism; pyridoxal 5'-phosphate salvage; pyridoxal 5'-phosphate from pyridoxamine 5'-phosphate: step 1/1. It participates in cofactor metabolism; pyridoxal 5'-phosphate salvage; pyridoxal 5'-phosphate from pyridoxine 5'-phosphate: step 1/1. Its function is as follows. Catalyzes the oxidation of either pyridoxine 5'-phosphate (PNP) or pyridoxamine 5'-phosphate (PMP) into pyridoxal 5'-phosphate (PLP). The chain is Pyridoxine/pyridoxamine 5'-phosphate oxidase from Flavobacterium johnsoniae (strain ATCC 17061 / DSM 2064 / JCM 8514 / BCRC 14874 / CCUG 350202 / NBRC 14942 / NCIMB 11054 / UW101) (Cytophaga johnsonae).